A 115-amino-acid polypeptide reads, in one-letter code: Ribonuclease P protein component (115 aa).

The protein belongs to the RnpA family. Consists of a catalytic RNA component (M1 or rnpB) and a protein subunit.

It catalyses the reaction Endonucleolytic cleavage of RNA, removing 5'-extranucleotides from tRNA precursor.. RNaseP catalyzes the removal of the 5'-leader sequence from pre-tRNA to produce the mature 5'-terminus. It can also cleave other RNA substrates such as 4.5S RNA. The protein component plays an auxiliary but essential role in vivo by binding to the 5'-leader sequence and broadening the substrate specificity of the ribozyme. In Bacillus mycoides (strain KBAB4) (Bacillus weihenstephanensis), this protein is Ribonuclease P protein component.